The following is a 346-amino-acid chain: Peripherin-2 (346 aa).

Residues 1–24 (MALLKVKFDQKKRVKLAQGLWLMN) lie on the Cytoplasmic side of the membrane. Residues 25–43 (WLSVLAGIVLFSLGLFLKI) form a helical membrane-spanning segment. Over 44–61 (ELRKRSDVMDNSESHFVP) the chain is Lumenal. Residues 62 to 80 (NSLIGVGVLSCVFNSLAGK) traverse the membrane as a helical segment. Residues 81 to 99 (ICYDALDPAKYAKWKPWLK) are Cytoplasmic-facing. A helical transmembrane segment spans residues 100–123 (LYLAVCVFFNVILFLVALCCFLLR). At 124–264 (GSLESTLAYG…LNYYSSLMNS (141 aa)) the chain is on the lumenal side. Asparagine 229 carries N-linked (GlcNAc...) asparagine glycosylation. Residues 265-290 (MGVVTLLIWLFEVSITAGLRFLHTAL) form a helical membrane-spanning segment. At 291-346 (ESVSNPEDPECESEGWLLENSVSETWKAFLESFKKLGKSNQVEAEAADAGQAPEAG) the chain is on the cytoplasmic side. Residues 341 to 346 (QAPEAG) are interaction with MREG.

It belongs to the PRPH2/ROM1 family. In terms of assembly, homodimer; disulfide-linked. Forms a homotetramer. Forms a heterotetramer with ROM1. Homotetramer and heterotetramer core complexes go on to form higher order complexes by formation of intermolecular disulfide bonds. Interacts with MREG. Interacts with STX3. Interacts with SNAP25. As to expression, retina (photoreceptor). In rim region of ROS (rod outer segment) disks.

The protein resides in the membrane. It is found in the cell projection. The protein localises to the cilium. Its subcellular location is the photoreceptor outer segment. It localises to the photoreceptor inner segment. Functionally, essential for retina photoreceptor outer segment disk morphogenesis, may also play a role with ROM1 in the maintenance of outer segment disk structure. Required for the maintenance of retinal outer nuclear layer thickness. Required for the correct development and organization of the photoreceptor inner segment. The chain is Peripherin-2 (Prph2) from Rattus norvegicus (Rat).